The sequence spans 241 residues: Co-chaperone protein p23-1 (241 aa).

Residues 2-91 (SRHPEVKWAE…AEPERWNKLL (90 aa)) form the CS domain. 17 MGG repeats span residues 129–131 (MGG), 132–134 (MGG), 135–137 (MGG), 138–140 (MGG), 141–143 (MGG), 144–146 (MGG), 147–149 (MGG), 150–152 (MGG), 162–164 (MGG), 165–167 (MGG), 168–170 (MGG), 171–173 (MGG), 180–182 (MGG), 183–185 (MGG), 186–188 (MGG), 189–191 (MGG), and 192–194 (MGG). The tract at residues 129-194 (MGGMGGMGGM…GMGGMGGMGG (66 aa)) is 17 X 3 AA repeats of M-G-G. The interval 188 to 241 (GMGGMGGMEEFEDSDDEEETAKSGDKKDDAVKEEGLATEKAPAAEETTSVKEDK) is disordered. A compositionally biased stretch (acidic residues) spans 196 to 206 (EEFEDSDDEEE). The segment covering 207 to 224 (TAKSGDKKDDAVKEEGLA) has biased composition (basic and acidic residues). Over residues 225–234 (TEKAPAAEET) the composition is skewed to low complexity.

It belongs to the p23/wos2 family. As to quaternary structure, interacts with HSP90 in an ATP-dependent manner. Interacts with HSP90-5, HSP90-6 and HSP90-7. In terms of tissue distribution, widely expressed but preferentially in the root meristem.

It is found in the cytoplasm. The protein localises to the nucleus. Functionally, acts as a co-chaperone for HSP90. Controls root development through the modulation of auxin distribution in the root meristem. This Arabidopsis thaliana (Mouse-ear cress) protein is Co-chaperone protein p23-1.